The sequence spans 179 residues: O-acetyl-ADP-ribose deacetylase (179 aa).

The Macro domain occupies 1–175 (MTSRLQVIQG…LYARLLTQQG (175 aa)). Substrate is bound by residues 11 to 12 (DI), Asn-25, 33 to 35 (GVD), and 122 to 126 (STGVY). Asp-35 functions as the Proton acceptor in the catalytic mechanism.

This sequence belongs to the MacroD-type family. YmdB subfamily. In terms of assembly, homodimer. Interacts with RNase III.

It catalyses the reaction 3''-O-acetyl-ADP-D-ribose + H2O = ADP-D-ribose + acetate + H(+). The catalysed reaction is 2''-O-acetyl-ADP-D-ribose + H2O = ADP-D-ribose + acetate + H(+). Its function is as follows. Deacetylates O-acetyl-ADP ribose to yield ADP-ribose and free acetate. Down-regulates ribonuclease 3 (RNase III) activity. Acts by interacting directly with the region of the ribonuclease that is required for dimerization/activation. In Salmonella gallinarum (strain 287/91 / NCTC 13346), this protein is O-acetyl-ADP-ribose deacetylase.